We begin with the raw amino-acid sequence, 183 residues long: ARS-binding factor 2, mitochondrial (183 aa).

Residues 1-26 (MNSYSLLTRSFHESSKPLFNLASTLL) constitute a mitochondrion transit peptide. DNA-binding regions (HMG box) lie at residues 43–111 (PKRP…KEFD) and 116–183 (PKKP…YPLN).

The protein localises to the mitochondrion. It localises to the nucleus. In terms of biological role, specific binding to the autonomously replicating sequence 1 (ARS1). Interaction with regulatory regions: probably involved in compacting the mitochondrial genome. It might play a positive role in gene expression and replication. This Saccharomyces cerevisiae (strain ATCC 204508 / S288c) (Baker's yeast) protein is ARS-binding factor 2, mitochondrial (ABF2).